Reading from the N-terminus, the 547-residue chain is Sesquiterpene synthase TPS3 (547 aa).

(2E,6E)-farnesyl diphosphate is bound by residues Arg265, Asp302, Asp306, Arg443, and Asp446. 2 residues coordinate Mg(2+): Asp302 and Asp306. Positions 302–306 match the DDXXD motif motif; it reads DDIYD. Residues Asp446, Thr450, and Glu454 each contribute to the Mg(2+) site.

This sequence belongs to the terpene synthase family. Tpsb subfamily. In terms of assembly, monomer. Mg(2+) serves as cofactor.

It localises to the cytoplasm. It carries out the reaction (2E,6E)-farnesyl diphosphate = (1S,5S,6R)-alpha-bergamotene + diphosphate. Its pathway is secondary metabolite biosynthesis; terpenoid biosynthesis. Its function is as follows. Sesquiterpene synthase involved in the biosynthesis of volatile organic compounds. Mediates the conversion of (2E,6E)-farnesyl diphosphate (FPP) into alpha-bergamotene. Does not use (2E)-geranyl diphosphate (GPP) as substrate. The polypeptide is Sesquiterpene synthase TPS3 (Cananga odorata (Ylang-ylang tree)).